Consider the following 102-residue polypeptide: Lipopolysaccharide assembly protein A (102 aa).

At 1-2 (MK) the chain is on the cytoplasmic side. The helical transmembrane segment at 3-23 (YLLIFLLVLAIFVISVTLGAQ) threads the bilayer. Topologically, residues 24–43 (NDQQVTFNYLLAQGEYRIST) are periplasmic. The helical transmembrane segment at 44–64 (LLAVLFAAGFAIGWLICGLFW) threads the bilayer. Positions 64–92 (WLRVRVSLARAERKIKRLENQLSPATDVA) form a coiled coil. Residues 65 to 102 (LRVRVSLARAERKIKRLENQLSPATDVAVVPHSSAAKE) are Cytoplasmic-facing.

It belongs to the LapA family.

Its subcellular location is the cell inner membrane. In terms of biological role, involved in the assembly of lipopolysaccharide (LPS). This Escherichia coli (strain K12) protein is Lipopolysaccharide assembly protein A.